The primary structure comprises 459 residues: Beta-glucosidase (459 aa).

The Proton donor role is filled by E171. Residue E359 is the Nucleophile of the active site.

The protein belongs to the glycosyl hydrolase 1 family.

The enzyme catalyses Hydrolysis of terminal, non-reducing beta-D-glucosyl residues with release of beta-D-glucose.. The protein is Beta-glucosidase (abg) of Agrobacterium sp. (strain ATCC 21400).